The sequence spans 100 residues: Urease subunit gamma (100 aa).

Belongs to the urease gamma subunit family. Heterotrimer of UreA (gamma), UreB (beta) and UreC (alpha) subunits. Three heterotrimers associate to form the active enzyme.

The protein localises to the cytoplasm. It catalyses the reaction urea + 2 H2O + H(+) = hydrogencarbonate + 2 NH4(+). It functions in the pathway nitrogen metabolism; urea degradation; CO(2) and NH(3) from urea (urease route): step 1/1. This Cupriavidus pinatubonensis (strain JMP 134 / LMG 1197) (Cupriavidus necator (strain JMP 134)) protein is Urease subunit gamma.